Reading from the N-terminus, the 278-residue chain is Large ribosomal subunit protein uL2 (278 aa).

Basic residues-rich tracts occupy residues 210–220 (GRMRWKGKRPS) and 257–278 (TRRK…NKKR). Residues 210–278 (GRMRWKGKRP…VRRRKSNKKR (69 aa)) are disordered.

This sequence belongs to the universal ribosomal protein uL2 family. In terms of assembly, part of the 50S ribosomal subunit. Forms a bridge to the 30S subunit in the 70S ribosome.

In terms of biological role, one of the primary rRNA binding proteins. Required for association of the 30S and 50S subunits to form the 70S ribosome, for tRNA binding and peptide bond formation. It has been suggested to have peptidyltransferase activity; this is somewhat controversial. Makes several contacts with the 16S rRNA in the 70S ribosome. This Acidothermus cellulolyticus (strain ATCC 43068 / DSM 8971 / 11B) protein is Large ribosomal subunit protein uL2.